The chain runs to 263 residues: Receptor-transporting protein 1 (263 aa).

Residues 1–238 (MRIFRPWRLR…ETGSGWNFCS (238 aa)) lie on the Cytoplasmic side of the membrane. The 3CxxC-type zinc-finger motif lies at 88-197 (ASGRFHCSWC…GEFCEACQEG (110 aa)). The chain crosses the membrane as a helical span at residues 239 to 259 (IPWCLFWATVLLLIIYLQLSF). The Extracellular portion of the chain corresponds to 260-263 (RSSV).

This sequence belongs to the TMEM7 family. Interacts with olfactory receptors.

It localises to the cell membrane. Functionally, specifically promotes functional cell surface expression of olfactory receptors, but not of other GPCRs. The protein is Receptor-transporting protein 1 (RTP1) of Macaca fascicularis (Crab-eating macaque).